A 575-amino-acid polypeptide reads, in one-letter code: Arginine--tRNA ligase (575 aa).

The short motif at 131 to 141 (ANPTGPLHVGH) is the 'HIGH' region element.

It belongs to the class-I aminoacyl-tRNA synthetase family. As to quaternary structure, monomer.

The protein resides in the cytoplasm. It carries out the reaction tRNA(Arg) + L-arginine + ATP = L-arginyl-tRNA(Arg) + AMP + diphosphate. The chain is Arginine--tRNA ligase from Jannaschia sp. (strain CCS1).